We begin with the raw amino-acid sequence, 841 residues long: uncharacterized protein (841 aa).

The first 31 residues, 1–31 (MKIERYFKAIARAFIITFLFSLILQDNGVLA), serve as a signal peptide directing secretion.

The protein resides in the secreted. This is an uncharacterized protein from Schizosaccharomyces pombe (strain 972 / ATCC 24843) (Fission yeast).